The following is a 199-amino-acid chain: Recombination protein RecR (199 aa).

The segment at 60–75 (CARCHTFTEGEVCSTC) adopts a C4-type zinc-finger fold. The region spanning 83–178 (SRLAVVETPA…HVTRLARGVP (96 aa)) is the Toprim domain.

The protein belongs to the RecR family.

In terms of biological role, may play a role in DNA repair. It seems to be involved in an RecBC-independent recombinational process of DNA repair. It may act with RecF and RecO. The sequence is that of Recombination protein RecR from Paracidovorax citrulli (strain AAC00-1) (Acidovorax citrulli).